Here is a 779-residue protein sequence, read N- to C-terminus: uncharacterized protein (779 aa).

Phosphoserine occurs at positions 97 and 120. Residues 125–135 (EIDGEDEKKSV) show a composition bias toward basic and acidic residues. The disordered stretch occupies residues 125–174 (EIDGEDEKKSVGQESITGSAKRKDRRSKTNGSKRQKAEANREPPSDISLS). Residues 144-158 (AKRKDRRSKTNGSKR) show a composition bias toward basic residues. Residues 159-168 (QKAEANREPP) are compositionally biased toward basic and acidic residues. Residues 215–222 (GPPGCGKT) and 533–540 (GPPGCGKT) contribute to the ATP site. The segment at 759–779 (DRQKYQRLAKRWSSASTNDAD) is disordered.

The protein belongs to the AAA ATPase family.

It localises to the nucleus. This is an uncharacterized protein from Schizosaccharomyces pombe (strain 972 / ATCC 24843) (Fission yeast).